The primary structure comprises 319 residues: Ribosomal protein L11 methyltransferase (319 aa).

Positions 165, 186, 208, and 251 each coordinate S-adenosyl-L-methionine.

This sequence belongs to the methyltransferase superfamily. PrmA family.

The protein localises to the cytoplasm. The enzyme catalyses L-lysyl-[protein] + 3 S-adenosyl-L-methionine = N(6),N(6),N(6)-trimethyl-L-lysyl-[protein] + 3 S-adenosyl-L-homocysteine + 3 H(+). Functionally, methylates ribosomal protein L11. The sequence is that of Ribosomal protein L11 methyltransferase from Limosilactobacillus reuteri subsp. reuteri (strain JCM 1112) (Lactobacillus reuteri).